We begin with the raw amino-acid sequence, 648 residues long: RAF proto-oncogene serine/threonine-protein kinase (648 aa).

S29 carries the phosphoserine; by MAPK1 modification. At S43 the chain carries Phosphoserine; by PKA and MAPK1. The 76-residue stretch at 56-131 (NTIRVFLPNK…IGEELQVDFL (76 aa)) folds into the RBD domain. A Phorbol-ester/DAG-type zinc finger spans residues 138 to 184 (THNFARKTFLKLAFCDICQKFLLNGFRCQTCGYKFHEHCSTKVPTMC). Residues H139, C152, C155, C165, C168, H173, C176, and C184 each contribute to the Zn(2+) site. The interval 220 to 334 (SVSRMPVSSQ…QEKNKIRPRG (115 aa)) is disordered. A compositionally biased stretch (polar residues) spans 239–271 (TFNTSSPSSEGSLSQRQRSTSTPNVHMVSTTLP). A Phosphoserine modification is found at S252. S259 bears the Phosphoserine; by PKA, PKC and PKB/AKT1 mark. T268 carries the phosphothreonine; by autocatalysis modification. T269 bears the Phosphothreonine; by PKA mark. Positions 275–285 (RMIEDAIRSHS) are enriched in basic and acidic residues. Over residues 286–301 (ESASPSALSSSPNNLS) the composition is skewed to low complexity. S289 is subject to Phosphoserine; by MAPK1. Residue S296 is modified to Phosphoserine. S301 carries the post-translational modification Phosphoserine; by MAPK1. The tract at residues 331–349 (RPRGQRDSSYYWEIEASEV) is interaction with PEBP1/RKIP. S338 is modified (phosphoserine; by PAK1, PAK2, PAK3 and PAK5). S339 is modified (phosphoserine; by PAK1, PAK2 and PAK3). A phosphotyrosine; by SRC mark is found at Y340 and Y341. Residues 349-609 (VMLSTRIGSG…PQILSSIELL (261 aa)) form the Protein kinase domain. ATP-binding positions include 355–363 (IGSGSFGTV) and K375. Catalysis depends on D468, which acts as the Proton acceptor. Residue S471 is modified to Phosphoserine. Position 491 is a phosphothreonine (T491). S494 carries the phosphoserine modification. S499 is modified (phosphoserine; by PKC). R563 is subject to Symmetric dimethylarginine; by PRMT5. S621 is subject to Phosphoserine. S642 is modified (phosphoserine; by MAPK1).

This sequence belongs to the protein kinase superfamily. TKL Ser/Thr protein kinase family. RAF subfamily. As to quaternary structure, monomer. Homodimer. Heterodimerizes with BRAF and this heterodimer possesses a highly increased kinase activity compared to the respective homodimers or monomers. Heterodimerization is mitogen-regulated and enhanced by 14-3-3 proteins. MAPK1/ERK2 activation can induce a negative feedback that promotes the dissociation of the heterodimer. Forms a multiprotein complex with Ras (M-Ras/MRAS), SHOC2 and protein phosphatase 1 (PPP1CA, PPP1CB and PPP1CC). Interacts with LZTR1. Interacts with Ras proteins; the interaction is antagonized by RIN1. Weakly interacts with RIT1. Interacts (via N-terminus) with RGS14 (via RBD domains); the interaction mediates the formation of a ternary complex with BRAF, a ternary complex inhibited by GNAI1. Probably forms a complex composed of chaperones HSP90 and HSP70, co-chaperones CDC37, PPP5C, TSC1 and client protein TSC2, CDK4, AKT, RAF1 and NR3C1; this complex does not contain co-chaperones STIP1/HOP and PTGES3/p23. Interacts with STK3/MST2; the interaction inhibits its pro-apoptotic activity. Interacts (when phosphorylated at Ser-259) with YWHAZ (unphosphorylated at 'Thr-232'). Interacts with MAP2K1/MEK1 and MAP2K2/MEK2. Interacts with MAP3K5/ASF1 (via N-terminus) and this interaction inhibits the proapoptotic function of MAP3K5/ASK1. Interacts with PAK1 (via kinase domain). The phosphorylated form interacts with PIN1. The Ser-338 and Ser-339 phosphorylated form (by PAK1) interacts with BCL2. Interacts with PEBP1/RKIP and this interaction is enhanced if RAF1 is phosphorylated on residues Ser-338, Ser-339, Tyr-340 and Tyr-341. Interacts with ADCY2, ADCY5, ADCY6, DGKH, RCAN1/DSCR1, PPP1R12A, PKB/AKT1, PPP2CA, PPP2R1B, SPRY2, SPRY4, CNKSR1/CNK1, KSR2 and PHB/prohibitin. Interacts with ROCK2. In its active form, interacts with PRMT5. Interacts with FAM83B; displaces 14-3-3 proteins from RAF1 and activates RAF1. Interacts with PDE8A; the interaction promotes RAF1 activity. Interacts with MFHAS1. Interacts with GLS. Interacts with NEK10 and MAP2K1; the interaction is direct with NEK10 and required for ERK1/2-signaling pathway activation in response to UV irradiation. Zn(2+) serves as cofactor. Phosphorylation at Thr-269, Ser-338, Tyr-341, Thr-491 and Ser-494 results in its activation. Phosphorylation at Ser-29, Ser-43, Ser-289, Ser-296, Ser-301 and Ser-642 by MAPK1/ERK2 results in its inactivation. Phosphorylation at Ser-259 induces the interaction with YWHAZ and inactivates kinase activity. Dephosphorylation of Ser-259 by the SHOC2-MRAS-PP1c (SMP) complex consisting of SHOC2, GTP-bound M-Ras/MRAS and the catalytic subunit of protein phosphatase 1 (PPP1CA, PPP1CB or PPP1CC); this relieves inactivation and stimulates kinase activity. Phosphorylation at Ser-338 by PAK1 and PAK5 and Ser-339 by PAK1 is required for its mitochondrial localization. Phosphorylation at Ser-621 in response to growth factor treatment stabilizes the protein, possibly by preventing proteasomal degradation. Phosphorylation at Ser-289, Ser-296, Ser-301, Ser-338 and Ser-621 are somehow linked to the methylation potential of cells. Treatment of cells with HGF in the presence of the methylation inhibitor 5'-methylthioadenosine (MTA) results in increased phosphorylation at Ser-338 and Ser-621 and decreased phosphorylation at Ser-296, Ser-301 and Ser-338. Dephosphorylation at Ser-338 by PPP5C results in an activity decrease. Post-translationally, methylated at Arg-563 in response to EGF treatment. This modification leads to destabilization of the protein, possibly through proteasomal degradation. In skeletal muscle, isoform 1 is more abundant than isoform 2.

It localises to the cytoplasm. The protein resides in the cell membrane. The protein localises to the mitochondrion. Its subcellular location is the nucleus. The catalysed reaction is L-seryl-[protein] + ATP = O-phospho-L-seryl-[protein] + ADP + H(+). The enzyme catalyses L-threonyl-[protein] + ATP = O-phospho-L-threonyl-[protein] + ADP + H(+). Its activity is regulated as follows. Regulation is a highly complex process involving membrane recruitment, protein-protein interactions, dimerization, and phosphorylation/dephosphorylation events. Ras-GTP recruits RAF1 to the membrane, thereby promoting its activation. The inactive conformation of RAF1 is maintained by autoinhibitory interactions occurring between the N-terminal regulatory and the C-terminal catalytic domains and by the binding of a 14-3-3 protein that contacts two phosphorylation sites, Ser-259 and Ser-621. Upon mitogenic stimulation, Ras and PPP2R1A cooperate to release autoinhibition and the subsequent phosphorylation of activating sites: Ser-338, Tyr-341, Thr-491, and Ser-494, yields a fully active kinase. Through a negative feedback mechanism involving MAPK1/ERK2, RAF1 is phosphorylated on Ser-29, Ser-43, Ser-289, Ser-296, Ser-301 and Ser-642 by MAPK1/ERK2, which yields an inactive, desensitized kinase. The signaling-competent conformation of RAF1 is finally re-established by the coordinated action of PIN1, a prolyl isomerase that converts pSer and pThr residues from the cis to the trans conformation, which is preferentially recognized and dephosphorylated by PPP2R1A. Activated by homodimerization and heterodimerization (with BRAF). Also regulated through association with other proteins such as KSR2, CNKSR1/CNK1, PEBP1/RKIP, PHB/prohibitin and SPRY4. PEBP1/RKIP acts by dissociating RAF1 from its substrates MAP2K1/MEK1 and MAP2K2/MEK2. PHB/prohibitin facilitates the displacement of 14-3-3 from RAF1 by activated Ras, thereby promoting cell membrane localization and phosphorylation of RAF1 at the activating Ser-338. SPRY4 inhibits Ras-independent, but not Ras-dependent, activation of RAF1. CNKSR1/CNK1 regulates Src-mediated RAF1 activation. Serine/threonine-protein kinase that acts as a regulatory link between the membrane-associated Ras GTPases and the MAPK/ERK cascade, and this critical regulatory link functions as a switch determining cell fate decisions including proliferation, differentiation, apoptosis, survival and oncogenic transformation. RAF1 activation initiates a mitogen-activated protein kinase (MAPK) cascade that comprises a sequential phosphorylation of the dual-specific MAPK kinases (MAP2K1/MEK1 and MAP2K2/MEK2) and the extracellular signal-regulated kinases (MAPK3/ERK1 and MAPK1/ERK2). The phosphorylated form of RAF1 (on residues Ser-338 and Ser-339, by PAK1) phosphorylates BAD/Bcl2-antagonist of cell death at 'Ser-75'. Phosphorylates adenylyl cyclases: ADCY2, ADCY5 and ADCY6, resulting in their activation. Phosphorylates PPP1R12A resulting in inhibition of the phosphatase activity. Phosphorylates TNNT2/cardiac muscle troponin T. Can promote NF-kB activation and inhibit signal transducers involved in motility (ROCK2), apoptosis (MAP3K5/ASK1 and STK3/MST2), proliferation and angiogenesis (RB1). Can protect cells from apoptosis also by translocating to the mitochondria where it binds BCL2 and displaces BAD/Bcl2-antagonist of cell death. Regulates Rho signaling and migration, and is required for normal wound healing. Plays a role in the oncogenic transformation of epithelial cells via repression of the TJ protein, occludin (OCLN) by inducing the up-regulation of a transcriptional repressor SNAI2/SLUG, which induces down-regulation of OCLN. Restricts caspase activation in response to selected stimuli, notably Fas stimulation, pathogen-mediated macrophage apoptosis, and erythroid differentiation. The protein is RAF proto-oncogene serine/threonine-protein kinase of Homo sapiens (Human).